We begin with the raw amino-acid sequence, 85 residues long: Conotoxin Im28.1 (85 aa).

Positions 1–21 (MPKLEMMLLVLLILPLCYIDA) are cleaved as a signal peptide. Positions 22–40 (VGPPPPWNMEDEIIEHWQK) are excised as a propeptide.

It belongs to the conotoxin D superfamily. Contains 5 disulfide bonds. In terms of tissue distribution, expressed by the venom duct.

Its subcellular location is the secreted. Functionally, probable neurotoxin. In Conus imperialis (Imperial cone), this protein is Conotoxin Im28.1.